A 98-amino-acid polypeptide reads, in one-letter code: Integration host factor subunit alpha (98 aa).

The span at 53 to 69 shows a compositional bias: basic and acidic residues; the sequence is DLREKNERPGRNPKTGE. The disordered stretch occupies residues 53-72; the sequence is DLREKNERPGRNPKTGEDIP.

Belongs to the bacterial histone-like protein family. Heterodimer of an alpha and a beta chain.

Functionally, this protein is one of the two subunits of integration host factor, a specific DNA-binding protein that functions in genetic recombination as well as in transcriptional and translational control. The sequence is that of Integration host factor subunit alpha from Vibrio atlanticus (strain LGP32) (Vibrio splendidus (strain Mel32)).